A 233-amino-acid chain; its full sequence is Ras-related protein RABA6a (233 aa).

20–27 is a GTP binding site; the sequence is GDSAVGKS. The Effector region signature appears at 42 to 50; sequence SKPTIGVEF. GTP is bound by residues 68 to 72, 126 to 129, and 156 to 157; these read DTAGQ, NKSD, and SA. Residues cysteine 230 and cysteine 231 are each lipidated (S-geranylgeranyl cysteine).

This sequence belongs to the small GTPase superfamily. Rab family.

The protein localises to the cell membrane. In terms of biological role, intracellular vesicle trafficking and protein transport. This Arabidopsis thaliana (Mouse-ear cress) protein is Ras-related protein RABA6a (RABA6A).